The following is a 266-amino-acid chain: MERRELCASLLAGGAAGMSVDLILFPLDTIKTRLQSPLGFSKSGGFRGIYAGVPSTAVGSFPNAAAFFVTYESAKRFLGSDSSYLSPIIHMAAAFLGELVACLIRVPSEVIKQRAQVSPSSTTYQMLSVTLREEGIKGLYRGYKSTVLREIPFSLVQFPLWEFLKNLWSWKQGRAVDCWQSAVCGAFAGGFAAAVTTPLDVAKTRIMLAKAGSGVANGNVLFALHEIWRTQGIMGLFAGVIPRMTMISLGGFIFLGAYDKVRSSLL.

Solcar repeat units lie at residues 4 to 77, 85 to 167, and 176 to 264; these read RELC…AKRF, LSPI…LKNL, and VDCW…VRSS. 6 consecutive transmembrane segments (helical) span residues 5-25, 49-69, 84-104, 141-161, 181-201, and 237-257; these read ELCASLLAGGAAGMSVDLILF, IYAGVPSTAVGSFPNAAAFFV, YLSPIIHMAAAFLGELVACLI, RGYKSTVLREIPFSLVQFPLW, SAVCGAFAGGFAAAVTTPLDV, and FAGVIPRMTMISLGGFIFLGA.

It belongs to the mitochondrial carrier (TC 2.A.29) family.

The protein localises to the mitochondrion inner membrane. It carries out the reaction S-adenosyl-L-homocysteine(out) + S-adenosyl-L-methionine(in) = S-adenosyl-L-homocysteine(in) + S-adenosyl-L-methionine(out). Functionally, mitochondrial S-adenosyl-L-methionine/S-adenosyl-L-homocysteine antiporter. Mediates the exchange of cytosolic S-adenosyl-L-methionine, the predominant methyl-group donor for macromolecule methylation processes, for mitochondrial S-adenosylhomocysteine(SAH), a by-product of methylation reactions. The polypeptide is Mitochondrial S-adenosylmethionine carrier protein (slc25a26) (Xenopus laevis (African clawed frog)).